Reading from the N-terminus, the 443-residue chain is Thymidine phosphorylase (443 aa).

Belongs to the thymidine/pyrimidine-nucleoside phosphorylase family. Homodimer.

It carries out the reaction thymidine + phosphate = 2-deoxy-alpha-D-ribose 1-phosphate + thymine. The protein operates within pyrimidine metabolism; dTMP biosynthesis via salvage pathway; dTMP from thymine: step 1/2. The enzymes which catalyze the reversible phosphorolysis of pyrimidine nucleosides are involved in the degradation of these compounds and in their utilization as carbon and energy sources, or in the rescue of pyrimidine bases for nucleotide synthesis. This Shewanella baltica (strain OS195) protein is Thymidine phosphorylase.